The following is a 348-amino-acid chain: MTSDFSPEPPMELCYENVNGSCIKSSYAPWPRAILYGVLGLGALLAVFGNLLVIIAILHFKQLHTPTNFLVASLACADFLVGVTVMPFSTVRSVESCWYFGESYCKFHTCFDTSFCFASLFHLCCISIDRYIAVTDPLTYPTKFTVSVSGLCIALSWFFSVTYSFSIFYTGANEEGIEELVVALTCVGGCQAPLNQNWVLLCFLLFFLPTVVMVFLYGRIFLVAKYQARKIEGTANQAQASSESYKERVAKRERKAAKTLGIAMAAFLVSWLPYIIDAVIDAYMNFITPAYVYEILVWCVYYNSAMNPLIYAFFYPWFRKAIKLIVSGKVFRADSSTTNLFSEEAGAG.

The Extracellular segment spans residues 1 to 33 (MTSDFSPEPPMELCYENVNGSCIKSSYAPWPRA). Asn19 is a glycosylation site (N-linked (GlcNAc...) asparagine). Disulfide bonds link Cys22-Cys186 and Cys105-Cys190. Residues 34 to 58 (ILYGVLGLGALLAVFGNLLVIIAIL) form a helical membrane-spanning segment. Topologically, residues 59-68 (HFKQLHTPTN) are cytoplasmic. A helical membrane pass occupies residues 69–90 (FLVASLACADFLVGVTVMPFST). Topologically, residues 91–105 (VRSVESCWYFGESYC) are extracellular. The helical transmembrane segment at 106-128 (KFHTCFDTSFCFASLFHLCCISI) threads the bilayer. The spermidine site is built by Asp112 and Thr113. The Cytoplasmic portion of the chain corresponds to 129–148 (DRYIAVTDPLTYPTKFTVSV). A helical membrane pass occupies residues 149-170 (SGLCIALSWFFSVTYSFSIFYT). Over 171-196 (GANEEGIEELVVALTCVGGCQAPLNQ) the chain is Extracellular. The interval 174 to 187 (EEGIEELVVALTCV) is extracellular Loop 2 (ECL2). Residues 197-218 (NWVLLCFLLFFLPTVVMVFLYG) traverse the membrane as a helical segment. Residues 219 to 256 (RIFLVAKYQARKIEGTANQAQASSESYKERVAKRERKA) are Cytoplasmic-facing. Residues 257–280 (AKTLGIAMAAFLVSWLPYIIDAVI) traverse the membrane as a helical segment. The Extracellular portion of the chain corresponds to 281–293 (DAYMNFITPAYVY). A helical transmembrane segment spans residues 294–314 (EILVWCVYYNSAMNPLIYAFF). At 315–348 (YPWFRKAIKLIVSGKVFRADSSTTNLFSEEAGAG) the chain is on the cytoplasmic side.

It belongs to the G-protein coupled receptor 1 family. Specifically expressed in neurons of the olfactory epithelium.

It localises to the cell membrane. In terms of biological role, olfactory receptor specific for trace amines, such as triethylamine, N,N-dimethylcyclohexylamine (DMCHA), beta-phenylethylamine (beta-PEA), cadaverine (CAD) and polyamines such as spermine and spermidine. Trace amine compounds are enriched in animal body fluids and act on trace amine-associated receptors (TAARs) to elicit both intraspecific and interspecific innate behaviors. Trace amine-binding causes a conformation change that triggers signaling via G(s)-class of G alpha proteins (GNAL or GNAS). In mature olfactory sensory neurons, Taar9 is coupled with GNAL/G(olf)G alpha protein and mediates activation of adenylate cyclase activity to activate cAMP signaling and eventually transmit odorant signals to achieve membrane depolarization. In immature olfactory sensory neurons, Taar9 is coupled with GNAS/G(s) G alpha proteins. The polypeptide is Trace amine-associated receptor 9 (Mus musculus (Mouse)).